A 135-amino-acid chain; its full sequence is Glutaredoxin-C3 (135 aa).

The Glutaredoxin domain occupies 26–134 (VARVERLASE…PLLKEAGALW (109 aa)). A disulfide bond links Cys46 and Cys49. A Responsive for interaction with TGA factors motif is present at residues 132–135 (ALWL).

Belongs to the glutaredoxin family. CC-type subfamily.

Its subcellular location is the cytoplasm. It localises to the nucleus. Functionally, has a glutathione-disulfide oxidoreductase activity in the presence of NADPH and glutathione reductase. Reduces low molecular weight disulfides and proteins. The polypeptide is Glutaredoxin-C3 (GRXC3) (Oryza sativa subsp. japonica (Rice)).